Reading from the N-terminus, the 93-residue chain is Molybdopterin synthase sulfur carrier subunit (93 aa).

1-thioglycine; alternate is present on Gly-93. A Glycyl adenylate; alternate modification is found at Gly-93.

The protein belongs to the MoaD family. MOCS2A subfamily. In terms of assembly, heterotetramer; composed of 2 small (MOCS2A) and 2 large (MOCS2B) subunits. In terms of processing, C-terminal thiocarboxylation occurs in 2 steps, it is first acyl-adenylated (-COAMP) via the hesA/moeB/thiF part of uba4, then thiocarboxylated (-COSH) via the rhodanese domain of uba4.

It is found in the cytoplasm. It participates in cofactor biosynthesis; molybdopterin biosynthesis. Acts as a sulfur carrier required for molybdopterin biosynthesis. Component of the molybdopterin synthase complex that catalyzes the conversion of precursor Z into molybdopterin by mediating the incorporation of 2 sulfur atoms into precursor Z to generate a dithiolene group. In the complex, serves as sulfur donor by being thiocarboxylated (-COSH) at its C-terminus by uba4. After interaction with MOCS2B, the sulfur is then transferred to precursor Z to form molybdopterin. This chain is Molybdopterin synthase sulfur carrier subunit, found in Pyrenophora tritici-repentis (strain Pt-1C-BFP) (Wheat tan spot fungus).